The sequence spans 520 residues: AarF domain-containing protein kinase 1 (520 aa).

Residues 148–455 (EFEKTPLGAA…GTHSSSSAFF (308 aa)) enclose the Protein kinase domain. ATP is bound by residues 154–162 (LGAASLAQV) and Lys-176. The Proton acceptor role is filled by Asp-308.

This sequence belongs to the protein kinase superfamily. ADCK protein kinase family.

Its subcellular location is the mitochondrion. Functionally, appears to be essential for maintaining mitochondrial cristae formation and mitochondrial function by acting via YME1L1 in a kinase-independent manner to regulate essential mitochondrial structural proteins OPA1 and IMMT. The action of this enzyme is not yet clear. It is not known if it has protein kinase activity and what type of substrate it would phosphorylate (Ser, Thr or Tyr). This Xenopus laevis (African clawed frog) protein is AarF domain-containing protein kinase 1 (adck1).